We begin with the raw amino-acid sequence, 179 residues long: MGALRDVGRPPNAIGSAVVSDLSPVFGTVRVEIRRLDPDLPLPRYAHPGDAGADLVTAEDVVLAPGERATVRTGIAIALPDGYAAFIHPRSGLAARHGLTVVNAPGTVDAGYRGEIKVPLLNTDPATPVKLTRGDRIAQLVIQRVERAAFVEVDELSDSARGAGGFGSTGGHAAGAEQS.

Substrate-binding positions include 90 to 92, Asn103, 107 to 109, and Lys117; these read RSG and TVD.

This sequence belongs to the dUTPase family. Requires Mg(2+) as cofactor.

It carries out the reaction dUTP + H2O = dUMP + diphosphate + H(+). The protein operates within pyrimidine metabolism; dUMP biosynthesis; dUMP from dCTP (dUTP route): step 2/2. Functionally, this enzyme is involved in nucleotide metabolism: it produces dUMP, the immediate precursor of thymidine nucleotides and it decreases the intracellular concentration of dUTP so that uracil cannot be incorporated into DNA. This chain is Deoxyuridine 5'-triphosphate nucleotidohydrolase, found in Thermobifida fusca (strain YX).